The primary structure comprises 286 residues: tRNA uridine(34) hydroxylase (286 aa).

The 96-residue stretch at 130–225 folds into the Rhodanese domain; that stretch reads RGDDVVFFDG…YGETFGDRGL (96 aa). Cysteine 185 acts as the Cysteine persulfide intermediate in catalysis.

The protein belongs to the TrhO family.

The enzyme catalyses uridine(34) in tRNA + AH2 + O2 = 5-hydroxyuridine(34) in tRNA + A + H2O. Its function is as follows. Catalyzes oxygen-dependent 5-hydroxyuridine (ho5U) modification at position 34 in tRNAs. In Rhodococcus erythropolis (strain PR4 / NBRC 100887), this protein is tRNA uridine(34) hydroxylase.